Consider the following 306-residue polypeptide: Pyridoxal 5'-phosphate synthase subunit PdxS (306 aa).

Asp36 contacts D-ribose 5-phosphate. Lys93 serves as the catalytic Schiff-base intermediate with D-ribose 5-phosphate. Gly165 contacts D-ribose 5-phosphate. Arg177 provides a ligand contact to D-glyceraldehyde 3-phosphate. Residues Gly226 and 247–248 (GS) contribute to the D-ribose 5-phosphate site.

The protein belongs to the PdxS/SNZ family. In the presence of PdxT, forms a dodecamer of heterodimers.

The enzyme catalyses aldehydo-D-ribose 5-phosphate + D-glyceraldehyde 3-phosphate + L-glutamine = pyridoxal 5'-phosphate + L-glutamate + phosphate + 3 H2O + H(+). It participates in cofactor biosynthesis; pyridoxal 5'-phosphate biosynthesis. In terms of biological role, catalyzes the formation of pyridoxal 5'-phosphate from ribose 5-phosphate (RBP), glyceraldehyde 3-phosphate (G3P) and ammonia. The ammonia is provided by the PdxT subunit. Can also use ribulose 5-phosphate and dihydroxyacetone phosphate as substrates, resulting from enzyme-catalyzed isomerization of RBP and G3P, respectively. The protein is Pyridoxal 5'-phosphate synthase subunit PdxS of Salinispora arenicola (strain CNS-205).